We begin with the raw amino-acid sequence, 121 residues long: Heme-degrading monooxygenase (121 aa).

The ABM domain occupies 2–101; the sequence is IIVTNTIKVE…EQREDRKGIV (100 aa). Asn-6 is a binding site for Fe cation. The interval 76-98 is disordered; it reads KSDSFKKAHGRTKDTREQREDRK. Positions 78–98 are enriched in basic and acidic residues; the sequence is DSFKKAHGRTKDTREQREDRK. Residue His-84 participates in heme binding.

This sequence belongs to the antibiotic biosynthesis monooxygenase family. Heme-degrading monooxygenase IsdG subfamily. In terms of assembly, homodimer.

The protein localises to the cytoplasm. The enzyme catalyses heme b + 3 reduced [NADPH--hemoprotein reductase] + 3 O2 = biliverdin IXalpha + CO + Fe(2+) + 3 oxidized [NADPH--hemoprotein reductase] + 3 H2O + H(+). Functionally, allows bacterial pathogens to use the host heme as an iron source. Catalyzes the oxidative degradation of the heme macrocyclic porphyrin ring to the biliverdin in the presence of a suitable electron donor such as ascorbate or NADPH--cytochrome P450 reductase, with subsequent release of free iron. This chain is Heme-degrading monooxygenase, found in Listeria innocua serovar 6a (strain ATCC BAA-680 / CLIP 11262).